The sequence spans 302 residues: Glutaminase (302 aa).

Positions 61, 111, 155, 162, 186, 238, and 256 each coordinate substrate.

This sequence belongs to the glutaminase family. Homotetramer.

It carries out the reaction L-glutamine + H2O = L-glutamate + NH4(+). In Pseudomonas aeruginosa (strain LESB58), this protein is Glutaminase.